Consider the following 405-residue polypeptide: L-rhamnonate dehydratase (405 aa).

Histidine 33 and arginine 59 together coordinate substrate. Mg(2+) is bound by residues aspartate 226, glutamate 252, and glutamate 280. The Proton acceptor role is filled by histidine 329. Residue glutamate 349 coordinates substrate.

This sequence belongs to the mandelate racemase/muconate lactonizing enzyme family. RhamD subfamily. Homooctamer; tetramer of dimers. Mg(2+) serves as cofactor.

It catalyses the reaction L-rhamnonate = 2-dehydro-3-deoxy-L-rhamnonate + H2O. Catalyzes the dehydration of L-rhamnonate to 2-keto-3-deoxy-L-rhamnonate (KDR). The chain is L-rhamnonate dehydratase from Escherichia coli O6:H1 (strain CFT073 / ATCC 700928 / UPEC).